Reading from the N-terminus, the 206-residue chain is Ribosomal RNA small subunit methyltransferase G (206 aa).

S-adenosyl-L-methionine-binding positions include glycine 73, leucine 78, 124–125, and arginine 139; that span reads VE.

Belongs to the methyltransferase superfamily. RNA methyltransferase RsmG family.

The protein resides in the cytoplasm. It catalyses the reaction guanosine(527) in 16S rRNA + S-adenosyl-L-methionine = N(7)-methylguanosine(527) in 16S rRNA + S-adenosyl-L-homocysteine. Functionally, specifically methylates the N7 position of guanine in position 527 of 16S rRNA. The protein is Ribosomal RNA small subunit methyltransferase G of Photorhabdus laumondii subsp. laumondii (strain DSM 15139 / CIP 105565 / TT01) (Photorhabdus luminescens subsp. laumondii).